Consider the following 578-residue polypeptide: Vesicular acetylcholine transporter (578 aa).

The Cytoplasmic portion of the chain corresponds to 1 to 32; it reads MASFQIPVINLEVREVKDIVWEKIQEPVNQRR. Residues 33–53 traverse the membrane as a helical segment; the sequence is LILVIVSIALLLDNMLYMVIV. Residues 54–98 are Lumenal, vesicle-facing; it reads PIIPDYLREIGSFDDGPTPPPLRDNITGKIIPVHHDHHGQDSATG. N78 carries N-linked (GlcNAc...) asparagine glycosylation. The helical transmembrane segment at 99-119 threads the bilayer; that stretch reads ILFASKAIVQLMVNPFSGGLI. Residues 120 to 125 are Cytoplasmic-facing; it reads DKIGYD. A helical membrane pass occupies residues 126–146; sequence LPMMIGLTIMFFSTAVFACGS. Residues 147–154 are Lumenal, vesicle-facing; it reads SYSVLFFA. The helical transmembrane segment at 155 to 175 threads the bilayer; sequence RSLQGAGSAFADTAGLAMIAD. At 176-187 the chain is on the cytoplasmic side; sequence RFTEENERSQAL. A helical membrane pass occupies residues 188-208; the sequence is GIALAFISFGCLVAPPFGGAL. At 209–215 the chain is on the lumenal, vesicle side; the sequence is YQFAGKE. The helical transmembrane segment at 216–236 threads the bilayer; sequence VPFLILALVCLLDGLMLLLVM. Topologically, residues 237-263 are cytoplasmic; that stretch reads KPVKEAMKQSKDVQDQVIPIWRLLMDP. Residues 264-284 form a helical membrane-spanning segment; it reads YIAVCAGALTMSNVALAFLEP. The Lumenal, vesicle portion of the chain corresponds to 285 to 299; the sequence is TISLWMEDNMTTDNW. An N-linked (GlcNAc...) asparagine glycan is attached at N293. A helical transmembrane segment spans residues 300–320; sequence KIGMVWLPAFFPHVLGVVITV. Topologically, residues 321–330 are cytoplasmic; it reads KMARKYPQHQ. Residues 331 to 351 traverse the membrane as a helical segment; sequence WLMAAGGLALEGFSCFIIPFC. The Lumenal, vesicle segment spans residues 352–355; the sequence is SGYK. A helical transmembrane segment spans residues 356 to 376; the sequence is MLMLPICVICFGIALIDTALL. Residues 377 to 387 are Cytoplasmic-facing; sequence PTLGYLVDVRY. The chain crosses the membrane as a helical span at residues 388–408; that stretch reads VSVYGSIYAIADISYSIAYAV. Topologically, residues 409-413 are lumenal, vesicle; sequence GPIIA. Residues 414-434 traverse the membrane as a helical segment; sequence GGVVEAIGFTALNFLIAFSNL. Residues 435 to 578 lie on the Cytoplasmic side of the membrane; it reads AYVPVLRKLR…APANPFRQGF (144 aa). Composition is skewed to low complexity over residues 507 to 534 and 549 to 563; these read EYQQQQQGYQQGYQQDQGYQPGYQEQGG and QQQQQQQQQQQQQVQ. The disordered stretch occupies residues 507-578; that stretch reads EYQQQQQGYQ…APANPFRQGF (72 aa).

It belongs to the major facilitator superfamily. Vesicular transporter family.

The protein localises to the membrane. Its function is as follows. Involved in acetylcholine transport into synaptic vesicles. This chain is Vesicular acetylcholine transporter (VAChT), found in Drosophila melanogaster (Fruit fly).